We begin with the raw amino-acid sequence, 394 residues long: NAD(P)H-quinone oxidoreductase subunit H (394 aa).

The protein belongs to the complex I 49 kDa subunit family. In terms of assembly, NDH-1 can be composed of about 15 different subunits; different subcomplexes with different compositions have been identified which probably have different functions.

Its subcellular location is the cellular thylakoid membrane. It catalyses the reaction a plastoquinone + NADH + (n+1) H(+)(in) = a plastoquinol + NAD(+) + n H(+)(out). The catalysed reaction is a plastoquinone + NADPH + (n+1) H(+)(in) = a plastoquinol + NADP(+) + n H(+)(out). NDH-1 shuttles electrons from an unknown electron donor, via FMN and iron-sulfur (Fe-S) centers, to quinones in the respiratory and/or the photosynthetic chain. The immediate electron acceptor for the enzyme in this species is believed to be plastoquinone. Couples the redox reaction to proton translocation, and thus conserves the redox energy in a proton gradient. Cyanobacterial NDH-1 also plays a role in inorganic carbon-concentration. This is NAD(P)H-quinone oxidoreductase subunit H from Trichormus variabilis (strain ATCC 29413 / PCC 7937) (Anabaena variabilis).